The chain runs to 274 residues: MQAILSSWFVQGMIKATSDMWLKGWDERNGGNVSLRLTAEDVTPYESDFYPQPRHEALSQPMPALADCWFIVTGSGKFFRNVQLDPADSLVVLQVDSDGKGYRIFWGLTNGGLPTSELASHFQSHIVRMGVTHGHDRVIMHCHATNLIALSYVLELDTAKFTRELWEGSTECLVVFPDGVGIVPWMVPGTDAIGDATSEQMQRHSLVLWPFHGIFGTGPTLDDAFGLIDTAEKSAEVMVKVRSMGGKKQTISTEELIALGKRFGVTPMEVALRV.

Residue E117 is part of the active site. Zn(2+) contacts are provided by H141, H143, and H212.

Belongs to the aldolase class II family. RhaD subfamily. Homotetramer. Requires Zn(2+) as cofactor.

The protein resides in the cytoplasm. The catalysed reaction is L-rhamnulose 1-phosphate = (S)-lactaldehyde + dihydroxyacetone phosphate. It participates in carbohydrate degradation; L-rhamnose degradation; glycerone phosphate from L-rhamnose: step 3/3. Catalyzes the reversible cleavage of L-rhamnulose-1-phosphate to dihydroxyacetone phosphate (DHAP) and L-lactaldehyde. In Pectobacterium carotovorum subsp. carotovorum (strain PC1), this protein is Rhamnulose-1-phosphate aldolase.